A 390-amino-acid chain; its full sequence is 1-deoxy-D-xylulose 5-phosphate reductoisomerase (390 aa).

NADPH-binding residues include Thr-10, Gly-11, Ser-12, Ile-13, Gly-36, Arg-37, Asn-38, and Asn-121. Residue Lys-122 participates in 1-deoxy-D-xylulose 5-phosphate binding. Glu-123 is a binding site for NADPH. Asp-147 lines the Mn(2+) pocket. 1-deoxy-D-xylulose 5-phosphate-binding residues include Ser-148, Glu-149, Ser-173, and His-196. Glu-149 lines the Mn(2+) pocket. NADPH is bound at residue Gly-202. Residues Ser-209, Asn-214, Lys-215, and Glu-218 each coordinate 1-deoxy-D-xylulose 5-phosphate. Glu-218 contacts Mn(2+). The tract at residues 367-390 is disordered; it reads AASEHGRREAEKRVGARAHAPASR. The segment covering 370-380 has biased composition (basic and acidic residues); that stretch reads EHGRREAEKRV.

The protein belongs to the DXR family. Mg(2+) is required as a cofactor. It depends on Mn(2+) as a cofactor.

It catalyses the reaction 2-C-methyl-D-erythritol 4-phosphate + NADP(+) = 1-deoxy-D-xylulose 5-phosphate + NADPH + H(+). It functions in the pathway isoprenoid biosynthesis; isopentenyl diphosphate biosynthesis via DXP pathway; isopentenyl diphosphate from 1-deoxy-D-xylulose 5-phosphate: step 1/6. Catalyzes the NADPH-dependent rearrangement and reduction of 1-deoxy-D-xylulose-5-phosphate (DXP) to 2-C-methyl-D-erythritol 4-phosphate (MEP). This is 1-deoxy-D-xylulose 5-phosphate reductoisomerase from Anaeromyxobacter dehalogenans (strain 2CP-1 / ATCC BAA-258).